Here is a 252-residue protein sequence, read N- to C-terminus: 5'-nucleotidase SurE (252 aa).

Residues D8, D9, S40, and N93 each contribute to the a divalent metal cation site.

The protein belongs to the SurE nucleotidase family. A divalent metal cation is required as a cofactor.

The protein resides in the cytoplasm. It carries out the reaction a ribonucleoside 5'-phosphate + H2O = a ribonucleoside + phosphate. Its function is as follows. Nucleotidase that shows phosphatase activity on nucleoside 5'-monophosphates. This is 5'-nucleotidase SurE from Methylocella silvestris (strain DSM 15510 / CIP 108128 / LMG 27833 / NCIMB 13906 / BL2).